Consider the following 518-residue polypeptide: Chromosomal replication initiator protein DnaA (518 aa).

Residues 1 to 73 (MTLAEFWPLC…REELAAGRPA (73 aa)) form a domain I, interacts with DnaA modulators region. The domain II stretch occupies residues 73 to 180 (AFVFKPGEGV…DAEEARYEQT (108 aa)). The interval 144–180 (HEPRQAAGPASRPESAAVAKARTDAQRDAEEARYEQT) is disordered. Over residues 164-177 (ARTDAQRDAEEARY) the composition is skewed to basic and acidic residues. Residues 181–397 (NLSPDYTFDT…GAFNRVGASS (217 aa)) form a domain III, AAA+ region region. Residues glycine 225, glycine 227, lysine 228, and threonine 229 each coordinate ATP. The tract at residues 398–518 (RFMNRPVIDI…YEKLLILIQN (121 aa)) is domain IV, binds dsDNA.

It belongs to the DnaA family. As to quaternary structure, oligomerizes as a right-handed, spiral filament on DNA at oriC.

Its subcellular location is the cytoplasm. Functionally, plays an essential role in the initiation and regulation of chromosomal replication. ATP-DnaA binds to the origin of replication (oriC) to initiate formation of the DNA replication initiation complex once per cell cycle. Binds the DnaA box (a 9 base pair repeat at the origin) and separates the double-stranded (ds)DNA. Forms a right-handed helical filament on oriC DNA; dsDNA binds to the exterior of the filament while single-stranded (ss)DNA is stabiized in the filament's interior. The ATP-DnaA-oriC complex binds and stabilizes one strand of the AT-rich DNA unwinding element (DUE), permitting loading of DNA polymerase. After initiation quickly degrades to an ADP-DnaA complex that is not apt for DNA replication. Binds acidic phospholipids. The chain is Chromosomal replication initiator protein DnaA from Neisseria gonorrhoeae (strain ATCC 700825 / FA 1090).